The sequence spans 192 residues: uncharacterized protein (192 aa).

Residues 1–17 form the signal peptide; the sequence is MFLHLILLAGLAPVVYL.

This is an uncharacterized protein from Caenorhabditis elegans.